The sequence spans 592 residues: uncharacterized protein (592 aa).

The signal sequence occupies residues 1–23; that stretch reads MRKAPLLRFTLASLALACSQAFA. Ser-37 serves as the catalytic Nucleophile. Catalysis depends on residues Asp-294 and His-297. The Autotransporter domain maps to 334 to 592; that stretch reads HQDELRNQWQ…PDPGEPGGKP (259 aa). Residues 572-592 form a disordered region; that stretch reads FTLTGYTPHTAPDPGEPGGKP.

Belongs to the 'GDSL' lipolytic enzyme family.

This is an uncharacterized protein from Pseudomonas putida (Arthrobacter siderocapsulatus).